Reading from the N-terminus, the 396-residue chain is L-aspartate--glyoxylate aminotransferase (396 aa).

K196 carries the post-translational modification N6-(pyridoxal phosphate)lysine.

Belongs to the class-V pyridoxal-phosphate-dependent aminotransferase family. Requires pyridoxal 5'-phosphate as cofactor.

The catalysed reaction is oxaloacetate + glycine = glyoxylate + L-aspartate. Functionally, catalyzes the transamination of glyoxylate into glycine using L-aspartate as the preferred amino group donor. Is essential for the growth of P.denitrificans in the presence of glycolate and glyoxylate since it functions in glyoxylate assimilation via the beta-hydroxyaspartate cycle (BHAC). Can catalyze the reverse reaction in vitro, and also use L-serine and L-glutamate as amino group donor, but with much less efficiency than L-aspartate. This Paracoccus denitrificans (strain Pd 1222) protein is L-aspartate--glyoxylate aminotransferase.